The following is a 126-amino-acid chain: Large ribosomal subunit protein bL12 (126 aa).

This sequence belongs to the bacterial ribosomal protein bL12 family. Homodimer. Part of the ribosomal stalk of the 50S ribosomal subunit. Forms a multimeric L10(L12)X complex, where L10 forms an elongated spine to which 2 to 4 L12 dimers bind in a sequential fashion. Binds GTP-bound translation factors.

In terms of biological role, forms part of the ribosomal stalk which helps the ribosome interact with GTP-bound translation factors. Is thus essential for accurate translation. This chain is Large ribosomal subunit protein bL12, found in Moorella thermoacetica (strain ATCC 39073 / JCM 9320).